The following is a 457-amino-acid chain: Argininosuccinate lyase (457 aa).

Belongs to the lyase 1 family. Argininosuccinate lyase subfamily.

Its subcellular location is the cytoplasm. The catalysed reaction is 2-(N(omega)-L-arginino)succinate = fumarate + L-arginine. It functions in the pathway amino-acid biosynthesis; L-arginine biosynthesis; L-arginine from L-ornithine and carbamoyl phosphate: step 3/3. The sequence is that of Argininosuccinate lyase from Yersinia pseudotuberculosis serotype O:3 (strain YPIII).